A 712-amino-acid chain; its full sequence is Interleukin-1 receptor-associated kinase 1 (712 aa).

The 80-residue stretch at 27 to 106 folds into the Death domain; sequence MCRFYKVMDA…DIITAWHPPA (80 aa). Residue Thr-66 is modified to Phosphothreonine; by PKC/PRKCI. A disordered region spans residues 105 to 187; that stretch reads PAPLPSPGTT…STKPGPESSV (83 aa). A proST region region spans residues 110–211; that stretch reads SPGTTAPRPS…LCEISRGTHN (102 aa). A compositionally biased stretch (low complexity) spans 115 to 133; sequence APRPSSIPAPAEAEAWSPR. Ser-131 is subject to Phosphoserine. Lys-134 participates in a covalent cross-link: Glycyl lysine isopeptide (Lys-Gly) (interchain with G-Cter in ubiquitin). The segment covering 137-154 has biased composition (polar residues); the sequence is SSASTFLSPAFPGSQTHS. Lys-180 is covalently cross-linked (Glycyl lysine isopeptide (Lys-Gly) (interchain with G-Cter in ubiquitin)). Phosphothreonine; by IRAK4 is present on Thr-209. Residues 212–521 form the Protein kinase domain; it reads FSEELKIGEG…TQVYERLEKL (310 aa). ATP is bound by residues 218–226 and Lys-239; that span reads IGEGGFGCV. Asp-340 acts as the Proton acceptor in catalysis. ATP-binding positions include 342-345 and Asp-358; that span reads KSSN. Residues Ser-371 and Ser-375 each carry the phosphoserine modification. Thr-387 bears the Phosphothreonine mark. 3 disordered regions span residues 532–591, 613–660, and 690–712; these read SEAA…SDES, APLR…PPQI, and SSLP…EFQS. Residues 543-553 are compositionally biased toward polar residues; that stretch reads QENSYVSSTGR. Ser-556 is subject to Phosphoserine. Composition is skewed to low complexity over residues 562-575 and 643-658; these read QPLA…AQAA and EGLA…SEPP.

Belongs to the protein kinase superfamily. TKL Ser/Thr protein kinase family. Pelle subfamily. As to quaternary structure, homodimer. Forms a complex with TRAF6, PELI1, IRAK4 and MYD88. Direct binding of SMAD6 to PELI1 prevents complex formation and hence negatively regulates IL1R-TLR signaling and eventually NF-kappa-B-mediated gene expression. The TRAF6-PELI1-IRAK4-MYD88 complex recruits MAP3K7/TAK1, TAB1 and TAB2 to mediate NF-kappa-B activation. Interaction with MYD88 recruits IRAK1 to the stimulated receptor complex. Interacts with TOLLIP; this interaction occurs in the cytosol prior to receptor activation. Interacts with IL1RL1. Interacts with PELI1 and TRAF6. Interacts (when polyubiquitinated) with IKBKG/NEMO. Interacts with RSAD2/viperin. Interacts with IRAK1BP1. Interacts with PELI2. Interacts with ZC3H12A; this interaction increases the interaction between ZC3H12A and IKBKB/IKKB. Interacts with IRAK4. Interacts with PELI3. Interacts with INAVA; the interaction takes place upon PRR stimulation. Interacts (via C-terminus) with NFATC4 (via N-terminus). In terms of assembly, (Microbial infection) Interacts with mumps virus protein SH; this interaction inhibits downstream NF-kappa-B pathway activation. (Microbial infection) Interacts with alphaviruses SINV, CHIKV, RRV, VEEV and EEEV capsid proteins; the interactions lead to inhibition of IRAK1-dependent signaling. Requires Mg(2+) as cofactor. In terms of processing, following recruitment on the activated receptor complex, phosphorylated on Thr-209, probably by IRAK4, resulting in a conformational change of the kinase domain, allowing further phosphorylations to take place. Thr-387 phosphorylation in the activation loop is required to achieve full enzymatic activity. Polyubiquitinated by TRAF6 after cell stimulation with IL-1-beta by PELI1, PELI2 and PELI3. Polyubiquitination occurs with polyubiquitin chains linked through 'Lys-63'. Ubiquitination promotes interaction with NEMO/IKBKG. Also sumoylated; leading to nuclear translocation. In terms of tissue distribution, isoform 1 and isoform 2 are ubiquitously expressed in all tissues examined, with isoform 1 being more strongly expressed than isoform 2.

It localises to the cytoplasm. It is found in the nucleus. The protein localises to the lipid droplet. It catalyses the reaction L-seryl-[protein] + ATP = O-phospho-L-seryl-[protein] + ADP + H(+). It carries out the reaction L-threonyl-[protein] + ATP = O-phospho-L-threonyl-[protein] + ADP + H(+). Serine/threonine-protein kinase that plays a critical role in initiating innate immune response against foreign pathogens. Involved in Toll-like receptor (TLR) and IL-1R signaling pathways. Is rapidly recruited by MYD88 to the receptor-signaling complex upon TLR activation. Association with MYD88 leads to IRAK1 phosphorylation by IRAK4 and subsequent autophosphorylation and kinase activation. Phosphorylates E3 ubiquitin ligases Pellino proteins (PELI1, PELI2 and PELI3) to promote pellino-mediated polyubiquitination of IRAK1. Then, the ubiquitin-binding domain of IKBKG/NEMO binds to polyubiquitinated IRAK1 bringing together the IRAK1-MAP3K7/TAK1-TRAF6 complex and the NEMO-IKKA-IKKB complex. In turn, MAP3K7/TAK1 activates IKKs (CHUK/IKKA and IKBKB/IKKB) leading to NF-kappa-B nuclear translocation and activation. Alternatively, phosphorylates TIRAP to promote its ubiquitination and subsequent degradation. Phosphorylates the interferon regulatory factor 7 (IRF7) to induce its activation and translocation to the nucleus, resulting in transcriptional activation of type I IFN genes, which drive the cell in an antiviral state. When sumoylated, translocates to the nucleus and phosphorylates STAT3. The polypeptide is Interleukin-1 receptor-associated kinase 1 (Homo sapiens (Human)).